We begin with the raw amino-acid sequence, 319 residues long: NADH-quinone oxidoreductase subunit H 2 (319 aa).

9 helical membrane-spanning segments follow: residues 1-21, 77-97, 107-127, 147-167, 179-199, 214-234, 238-258, 262-282, and 293-313; these read MIGM…LLVL, ILAP…VAIG, VGLL…VLGA, LAYE…AGSF, VWFV…GIAA, LIAG…FLGE, VLLV…GPWL, VWFG…RATL, and FAWK…GIVV.

It belongs to the complex I subunit 1 family. In terms of assembly, NDH-1 is composed of 14 different subunits. Subunits NuoA, H, J, K, L, M, N constitute the membrane sector of the complex.

It localises to the cell inner membrane. It carries out the reaction a quinone + NADH + 5 H(+)(in) = a quinol + NAD(+) + 4 H(+)(out). Its function is as follows. NDH-1 shuttles electrons from NADH, via FMN and iron-sulfur (Fe-S) centers, to quinones in the respiratory chain. The immediate electron acceptor for the enzyme in this species is believed to be ubiquinone. Couples the redox reaction to proton translocation (for every two electrons transferred, four hydrogen ions are translocated across the cytoplasmic membrane), and thus conserves the redox energy in a proton gradient. This subunit may bind ubiquinone. The protein is NADH-quinone oxidoreductase subunit H 2 of Rhodopseudomonas palustris (strain ATCC BAA-98 / CGA009).